We begin with the raw amino-acid sequence, 92 residues long: Alpha-conotoxin-like Mi20.3 (92 aa).

An N-terminal signal peptide occupies residues 1–24; that stretch reads MPKLEMMLLVLLILPLSYFSAAGG. Residues 25–45 constitute a propeptide that is removed on maturation; the sequence is QVVQGDWRGDGLARYLQRGDR. At Pro55 the chain carries 4-hydroxyproline. Intrachain disulfides connect Cys63–Cys72, Cys68–Cys80, Cys73–Cys90, and Cys78–Cys92.

Belongs to the conotoxin D superfamily. In terms of assembly, hetero-, homo- or pseudo-homodimer (identical sequence, different post-translational modifications). As to expression, expressed by the venom duct.

The protein resides in the secreted. In terms of biological role, alpha-conotoxins act on postsynaptic membranes, they bind to the nicotinic acetylcholine receptors (nAChR) and thus inhibit them. Through its two C-terminal domains, this homodimeric protein would bind to two nAChR allosteric sites, located outside the nAChR C-loop of the principal binding face and at the adjacent binding interface in a clockwise direction. This toxin specifically blocks mammalian neuronal nAChR of the alpha-7/CHRNA7, alpha-3-beta-2/CHRNA3-CHRNB2 and alpha-4-beta-2/CHRNA4-CHRNB2 subtypes. In Conus miles (Soldier cone), this protein is Alpha-conotoxin-like Mi20.3.